An 82-amino-acid polypeptide reads, in one-letter code: Small ribosomal subunit protein bS16 (82 aa).

The protein belongs to the bacterial ribosomal protein bS16 family.

The polypeptide is Small ribosomal subunit protein bS16 (Cyanothece sp. (strain PCC 7425 / ATCC 29141)).